The sequence spans 168 residues: Cytochrome c oxidase subunit 2 (168 aa).

Residues 1 to 3 (MVD) are Cytoplasmic-facing. A helical membrane pass occupies residues 4-38 (EHKAHKAILAYEKGWLAFSLAMLFVFIALIAYTLA). The Periplasmic portion of the chain corresponds to 39 to 168 (THTAGVIPAG…NMFGTIVVKE (130 aa)). 4 residues coordinate Cu cation: histidine 114, cysteine 149, cysteine 153, and histidine 157.

This sequence belongs to the cytochrome c oxidase subunit 2 family.

The protein resides in the cell membrane. It carries out the reaction 4 Fe(II)-[cytochrome c] + O2 + 8 H(+)(in) = 4 Fe(III)-[cytochrome c] + 2 H2O + 4 H(+)(out). Subunits I and II form the functional core of the enzyme complex. Electrons originating in cytochrome c are transferred via heme a and Cu(A) to the binuclear center formed by heme a3 and Cu(B). In Thermus thermophilus (strain ATCC 27634 / DSM 579 / HB8), this protein is Cytochrome c oxidase subunit 2 (cbaB).